Here is a 232-residue protein sequence, read N- to C-terminus: Sugar fermentation stimulation protein homolog (232 aa).

Belongs to the SfsA family.

This chain is Sugar fermentation stimulation protein homolog, found in Pyrobaculum arsenaticum (strain DSM 13514 / JCM 11321 / PZ6).